The chain runs to 75 residues: Metallothionein-like protein 1 (75 aa).

This sequence belongs to the metallothionein superfamily. Type 15 family.

Metallothioneins have a high content of cysteine residues that bind various heavy metals. The protein is Metallothionein-like protein 1 (MT1B) of Trifolium repens (Creeping white clover).